The primary structure comprises 80 residues: Beta-toxin KAaH2 (80 aa).

The N-terminal stretch at 1–22 is a signal peptide; sequence MMKLMLFSIIVILFSLIGSIHG. Residues 25 to 80 enclose the LCN-type CS-alpha/beta domain; sequence VPGNYPLDSSDDTYLCAPLGENPSCIQICRKHGVKYGYCYAFQCWCEYLEDKNVKI. Intrachain disulfides connect cysteine 40–cysteine 63, cysteine 49–cysteine 68, and cysteine 53–cysteine 70.

The protein belongs to the long (3 C-C) scorpion toxin superfamily. Sodium/Potassium channel inhibitor family. In terms of tissue distribution, expressed by the venom gland.

Its subcellular location is the secreted. In terms of biological role, weakly inhibits the vertebrate potassium channel Kv1.1/KCNA1. The sequence is that of Beta-toxin KAaH2 from Androctonus australis (Sahara scorpion).